The chain runs to 393 residues: NAD(P)H-quinone oxidoreductase subunit H, chloroplastic (393 aa).

This sequence belongs to the complex I 49 kDa subunit family. As to quaternary structure, NDH is composed of at least 16 different subunits, 5 of which are encoded in the nucleus.

Its subcellular location is the plastid. The protein resides in the chloroplast thylakoid membrane. It catalyses the reaction a plastoquinone + NADH + (n+1) H(+)(in) = a plastoquinol + NAD(+) + n H(+)(out). The catalysed reaction is a plastoquinone + NADPH + (n+1) H(+)(in) = a plastoquinol + NADP(+) + n H(+)(out). Its function is as follows. NDH shuttles electrons from NAD(P)H:plastoquinone, via FMN and iron-sulfur (Fe-S) centers, to quinones in the photosynthetic chain and possibly in a chloroplast respiratory chain. The immediate electron acceptor for the enzyme in this species is believed to be plastoquinone. Couples the redox reaction to proton translocation, and thus conserves the redox energy in a proton gradient. The chain is NAD(P)H-quinone oxidoreductase subunit H, chloroplastic from Agrostis stolonifera (Creeping bentgrass).